The sequence spans 302 residues: 33 kDa chaperonin (302 aa).

Cystine bridges form between C255–C257 and C288–C291.

Belongs to the HSP33 family. Post-translationally, under oxidizing conditions two disulfide bonds are formed involving the reactive cysteines. Under reducing conditions zinc is bound to the reactive cysteines and the protein is inactive.

It localises to the cytoplasm. Redox regulated molecular chaperone. Protects both thermally unfolding and oxidatively damaged proteins from irreversible aggregation. Plays an important role in the bacterial defense system toward oxidative stress. In Caulobacter vibrioides (strain ATCC 19089 / CIP 103742 / CB 15) (Caulobacter crescentus), this protein is 33 kDa chaperonin.